The following is a 250-amino-acid chain: uncharacterized protein (250 aa).

An N-terminal signal peptide occupies residues 1 to 24; sequence MKGFLKPNFSLGALFLTLSPIATA. Cysteine 25 carries N-palmitoyl cysteine lipidation. A lipid anchor (S-diacylglycerol cysteine) is attached at cysteine 25. One can recognise a TNase-like domain in the interval 44–200; it reads RLRKARVNHW…FNNRKNIFSY (157 aa).

It is found in the cell membrane. This is an uncharacterized protein from Mycoplasma genitalium (strain ATCC 33530 / DSM 19775 / NCTC 10195 / G37) (Mycoplasmoides genitalium).